Here is a 384-residue protein sequence, read N- to C-terminus: DNA replication and repair protein RecF (384 aa).

Position 30–37 (30–37 (GENAQGKT)) interacts with ATP.

Belongs to the RecF family.

The protein localises to the cytoplasm. In terms of biological role, the RecF protein is involved in DNA metabolism; it is required for DNA replication and normal SOS inducibility. RecF binds preferentially to single-stranded, linear DNA. It also seems to bind ATP. This chain is DNA replication and repair protein RecF, found in Levilactobacillus brevis (strain ATCC 367 / BCRC 12310 / CIP 105137 / JCM 1170 / LMG 11437 / NCIMB 947 / NCTC 947) (Lactobacillus brevis).